The following is a 250-amino-acid chain: Leucyl/phenylalanyl-tRNA--protein transferase (250 aa).

The segment at 1 to 21 (MTPFRRPTVLGTSASAPFPPA) is disordered.

The protein belongs to the L/F-transferase family.

It localises to the cytoplasm. The enzyme catalyses N-terminal L-lysyl-[protein] + L-leucyl-tRNA(Leu) = N-terminal L-leucyl-L-lysyl-[protein] + tRNA(Leu) + H(+). It carries out the reaction N-terminal L-arginyl-[protein] + L-leucyl-tRNA(Leu) = N-terminal L-leucyl-L-arginyl-[protein] + tRNA(Leu) + H(+). It catalyses the reaction L-phenylalanyl-tRNA(Phe) + an N-terminal L-alpha-aminoacyl-[protein] = an N-terminal L-phenylalanyl-L-alpha-aminoacyl-[protein] + tRNA(Phe). In terms of biological role, functions in the N-end rule pathway of protein degradation where it conjugates Leu, Phe and, less efficiently, Met from aminoacyl-tRNAs to the N-termini of proteins containing an N-terminal arginine or lysine. The polypeptide is Leucyl/phenylalanyl-tRNA--protein transferase (Xanthomonas euvesicatoria pv. vesicatoria (strain 85-10) (Xanthomonas campestris pv. vesicatoria)).